The sequence spans 268 residues: ELL-associated factor 1 (268 aa).

A disordered region spans residues 106-268 (IQVKKTRAEG…LSESGSDSDD (163 aa)). A compositionally biased stretch (pro residues) spans 128 to 154 (TRPPQTSQPPPPPPPMPFRAPTKPPVG). A Phosphoserine modification is found at S165. The segment covering 171–181 (DDIKRELRAEV) has biased composition (basic and acidic residues). The necessary for transactivation activity stretch occupies residues 182–262 (DIIEQMSSSS…LRNDLQLSES (81 aa)). A compositionally biased stretch (low complexity) spans 188 to 213 (SSSSGSSSSDSESSSGSDDDSSSSGG). Residues 238 to 268 (NGTSRPQGSNQLMNTLRNDLQLSESGSDSDD) show a composition bias toward polar residues.

The protein belongs to the EAF family. Component of the super elongation complex (SEC), at least composed of EAF1, EAF2, CDK9, MLLT3/AF9, AFF (AFF1 or AFF4), the P-TEFb complex and ELL (ELL, ELL2 or ELL3). Interacts with ELL and ELL2. As to expression, strongly expressed in heart, brain, placenta, lung, liver, skeletal muscle, kidney, pancreas, spleen, prostate, testis, small intestine and colon. Poorly expressed in thymus.

The protein resides in the nucleus speckle. Its subcellular location is the nucleus. It localises to the cajal body. Functionally, acts as a transcriptional transactivator of ELL and ELL2 elongation activities. The protein is ELL-associated factor 1 (EAF1) of Homo sapiens (Human).